The primary structure comprises 367 residues: Phosphoribosylaminoimidazole-succinocarboxamide synthase (367 aa).

It belongs to the SAICAR synthetase family.

It carries out the reaction 5-amino-1-(5-phospho-D-ribosyl)imidazole-4-carboxylate + L-aspartate + ATP = (2S)-2-[5-amino-1-(5-phospho-beta-D-ribosyl)imidazole-4-carboxamido]succinate + ADP + phosphate + 2 H(+). It functions in the pathway purine metabolism; IMP biosynthesis via de novo pathway; 5-amino-1-(5-phospho-D-ribosyl)imidazole-4-carboxamide from 5-amino-1-(5-phospho-D-ribosyl)imidazole-4-carboxylate: step 1/2. The sequence is that of Phosphoribosylaminoimidazole-succinocarboxamide synthase from Shewanella baltica (strain OS155 / ATCC BAA-1091).